The sequence spans 263 residues: Type III pantothenate kinase (263 aa).

6–13 lines the ATP pocket; it reads DVGNTNIK. 108 to 111 is a substrate binding site; the sequence is GSDR. Residue aspartate 110 is the Proton acceptor of the active site. Residue aspartate 131 coordinates K(+). Threonine 134 provides a ligand contact to ATP. Threonine 187 is a substrate binding site.

The protein belongs to the type III pantothenate kinase family. Homodimer. The cofactor is NH4(+). It depends on K(+) as a cofactor.

The protein resides in the cytoplasm. The enzyme catalyses (R)-pantothenate + ATP = (R)-4'-phosphopantothenate + ADP + H(+). It functions in the pathway cofactor biosynthesis; coenzyme A biosynthesis; CoA from (R)-pantothenate: step 1/5. Its function is as follows. Catalyzes the phosphorylation of pantothenate (Pan), the first step in CoA biosynthesis. The sequence is that of Type III pantothenate kinase from Anaplasma phagocytophilum (strain HZ).